We begin with the raw amino-acid sequence, 339 residues long: Non-homologous end joining protein Ku (339 aa).

Residues Ile10–Thr187 form the Ku domain. Disordered stretches follow at residues Asp230 to Ala251 and Ser263 to Ala339. Basic and acidic residues predominate over residues Arg267–Pro277. Residues Ala278–Ala289 are compositionally biased toward basic residues. The span at Arg290–Ala310 shows a compositional bias: low complexity.

This sequence belongs to the prokaryotic Ku family. In terms of assembly, homodimer. Interacts with LigD.

In terms of biological role, with LigD forms a non-homologous end joining (NHEJ) DNA repair enzyme, which repairs dsDNA breaks with reduced fidelity. Binds linear dsDNA with 5'- and 3'- overhangs but not closed circular dsDNA nor ssDNA. Recruits and stimulates the ligase activity of LigD. This is Non-homologous end joining protein Ku from Cupriavidus necator (strain ATCC 17699 / DSM 428 / KCTC 22496 / NCIMB 10442 / H16 / Stanier 337) (Ralstonia eutropha).